Reading from the N-terminus, the 209-residue chain is Geminin (209 aa).

Positions 1–79 (MNPSMKQKQE…PESSENKNLG (79 aa)) are disordered. Residues 7–16 (QKQEEIKENI) show a composition bias toward basic and acidic residues. K27 bears the N6-acetyllysine mark. S34, S36, S49, S63, and S64 each carry phosphoserine. Residues 82-161 (TQESFDLMIK…AELIERLNGE (80 aa)) form a necessary and sufficient for interaction with IDAS and CDT1 region. The stretch at 94–144 (PSSQYWKEVAEKRRKALYEALKENEKLHKEIEQKDNEIARLKKENKELAEV) forms a coiled coil. The disordered stretch occupies residues 164-209 (DNFESLDNQEFDSEEETVEDSLVEDSEIGTCAEGTVSSSTDAKPCI). Residues 170–190 (DNQEFDSEEETVEDSLVEDSE) form a homeodomain binding region. The segment covering 170–190 (DNQEFDSEEETVEDSLVEDSE) has biased composition (acidic residues). S184 is subject to Phosphoserine; by CK2. Polar residues predominate over residues 198-209 (TVSSSTDAKPCI).

This sequence belongs to the geminin family. As to quaternary structure, homotetramer. Interacts with CDT1; this inhibits binding of the MCM complex to origins of replication. The complex with CDT1 exists in two forms, a 'permissive' heterotrimer and an 'inhibitory' heterohexamer. Interacts (via coiled-coil domain) with IDAS (via coiled-coil domain); this targets GMNN to the nucleus. The heterodimer formed by GMNN and MCIDAS has much lower affinity for CDT1 than the GMNN homodimer. Interacts with a subset of Hox proteins, affinity increasing from anterior to posterior types, the strongest interaction being with HOXB1, HOXC9 and HOXD10. Interacts with LRWD1 from G1/S to mitosis. Post-translationally, phosphorylated during mitosis. Phosphorylation at Ser-184 by CK2 results in enhanced binding to Hox proteins and more potent inhibitory effect on Hox transcriptional activity.

It localises to the cytoplasm. The protein localises to the nucleus. Its function is as follows. Inhibits DNA replication by preventing the incorporation of MCM complex into pre-replication complex (pre-RC). It is degraded during the mitotic phase of the cell cycle. Its destruction at the metaphase-anaphase transition permits replication in the succeeding cell cycle. Inhibits histone acetyltransferase activity of KAT7/HBO1 in a CDT1-dependent manner, inhibiting histone H4 acetylation and DNA replication licensing. Inhibits the transcriptional activity of a subset of Hox proteins, enrolling them in cell proliferative control. This chain is Geminin (GMNN), found in Homo sapiens (Human).